Reading from the N-terminus, the 1133-residue chain is Probable cation-transporting ATPase 9 (1133 aa).

The Cytoplasmic portion of the chain corresponds to 1-6 (MRVSSI). Residues 7–28 (EAEMENPIDVDKTDVEGELKIK) traverse the membrane as a helical segment. The Extracellular portion of the chain corresponds to 29 to 34 (QVTLLR). The helical transmembrane segment at 35-53 (ENIVKKIVFFLVAIFCSDR) threads the bilayer. Residues 54-167 (PSVLKKVFYE…IEINVPSFLT (114 aa)) are Cytoplasmic-facing. The helical transmembrane segment at 168-190 (LMWREFKKPINFLLYFGIIVWGI) threads the bilayer. Residues 191-193 (EQM) lie on the Extracellular side of the membrane. Residues 194-212 (YVSTAITVVFTTTINSLIC) form a helical membrane-spanning segment. Over 213 to 363 (IYIRGVMQKL…PFNKKFQQQA (151 aa)) the chain is Cytoplasmic. The chain crosses the membrane as a helical span at residues 364–383 (VKLTILMATLLLIGFLSTLS). The Extracellular portion of the chain corresponds to 384–396 (RLLDIELPPLFIA). A helical transmembrane segment spans residues 397–418 (FRFLDILIYSAPPGMPMLIAIT). Over 419–887 (NFVGLKRLKN…NSVEIFKGYL (469 aa)) the chain is Cytoplasmic. Asp451 serves as the catalytic 4-aspartylphosphate intermediate. Mg(2+)-binding residues include Asp827 and Asp831. The chain crosses the membrane as a helical span at residues 888–906 (QVALLRYLGFLTLAYFYSS). The Extracellular segment spans residues 907–915 (YSSGQMDWQ). The helical transmembrane segment at 916-931 (ALASGYFLVYLILGCN) threads the bilayer. At 932–948 (TPLKKLEKSVFDDNLFS) the chain is on the cytoplasmic side. Residues 949–972 (IYNVTSVLFGFTLHILSIVGCVES) traverse the membrane as a helical segment. Residues 973-994 (LHASPIYKEVNSLDAENNFQFE) are Extracellular-facing. Residues 995–1018 (TQHNTVLNFNILINFFYVIISNHI) form a helical membrane-spanning segment. Residues 1019–1030 (GKPMKDRYYKNT) are Cytoplasmic-facing. Residues 1031–1050 (IAIYYDLGLIYTCKCMILQV) form a helical membrane-spanning segment. Residues 1051–1101 (LLILEHTHHGLIFLILLLDQEFSSSLTVQVYFSLPMNLFLPEEFSLNFTQE) lie on the Extracellular side of the membrane. Residues 1102-1124 (VKKEKELLICNSSSTILEVDYNL) traverse the membrane as a helical segment. Topologically, residues 1125–1133 (RLNYFQQNF) are cytoplasmic.

It belongs to the cation transport ATPase (P-type) (TC 3.A.3) family. Type V subfamily.

The protein localises to the membrane. It catalyses the reaction ATP + H2O = ADP + phosphate + H(+). The polypeptide is Probable cation-transporting ATPase 9 (TPA9) (Tetrahymena thermophila).